The chain runs to 478 residues: Protein nucleotidyltransferase YdiU (478 aa).

ATP-binding residues include Gly84, Gly86, Arg87, Lys107, Asp119, Gly120, Arg170, and Arg177. The Proton acceptor role is filled by Asp246. Residues Asn247 and Asp256 each coordinate Mg(2+). Asp256 serves as a coordination point for ATP.

Belongs to the SELO family. Requires Mg(2+) as cofactor. The cofactor is Mn(2+).

It carries out the reaction L-seryl-[protein] + ATP = 3-O-(5'-adenylyl)-L-seryl-[protein] + diphosphate. The catalysed reaction is L-threonyl-[protein] + ATP = 3-O-(5'-adenylyl)-L-threonyl-[protein] + diphosphate. The enzyme catalyses L-tyrosyl-[protein] + ATP = O-(5'-adenylyl)-L-tyrosyl-[protein] + diphosphate. It catalyses the reaction L-histidyl-[protein] + UTP = N(tele)-(5'-uridylyl)-L-histidyl-[protein] + diphosphate. It carries out the reaction L-seryl-[protein] + UTP = O-(5'-uridylyl)-L-seryl-[protein] + diphosphate. The catalysed reaction is L-tyrosyl-[protein] + UTP = O-(5'-uridylyl)-L-tyrosyl-[protein] + diphosphate. Its function is as follows. Nucleotidyltransferase involved in the post-translational modification of proteins. It can catalyze the addition of adenosine monophosphate (AMP) or uridine monophosphate (UMP) to a protein, resulting in modifications known as AMPylation and UMPylation. The protein is Protein nucleotidyltransferase YdiU of Escherichia coli O157:H7.